The chain runs to 457 residues: Proton extrusion protein PxcA (457 aa).

4 helical membrane-spanning segments follow: residues 239-259, 332-352, 368-390, and 417-437; these read FILL…TFFL, INAI…GVVI, GILY…DMFV, and FNFL…KYWI.

The protein belongs to the CemA family.

The protein resides in the cell inner membrane. In terms of biological role, required for H(+) efflux immediately after light irradiation to form a rapid H(+) concentration gradient across the thylakoid membranes. Together with PxcL, contributes to transient H(+) uptake following dark to light transition. The protein is Proton extrusion protein PxcA of Gloeothece citriformis (strain PCC 7424) (Cyanothece sp. (strain PCC 7424)).